The chain runs to 310 residues: Collagen-like protein V6 (310 aa).

Polar residues predominate over residues 1–41 (MSLSTLFSPNTYNINSKSQTLNNLPSNPTSQTNTLWSNNAY). A disordered region spans residues 1–183 (MSLSTLFSPN…GDPGAKGDPG (183 aa)). Collagen-like domains are found at residues 61–119 (GQKG…KGQA) and 123–182 (GLKG…KGDP). Basic and acidic residues predominate over residues 92 to 101 (SGDKGDKGDS). N-linked (GlcNAc...) asparagine; by host glycosylation is found at N227 and N264.

Belongs to the sputnik virus V6 family.

This chain is Collagen-like protein V6, found in Sputnik virophage.